The following is a 301-amino-acid chain: Enolase-phosphatase E1 (301 aa).

Positions 22 and 24 each coordinate Mg(2+). Substrate is bound by residues 163 to 164 (SS) and Lys-197. Asp-222 serves as a coordination point for Mg(2+). Residues 273-301 (AQAGDTEAKRSASGDGALAAKKAPPTHDF) are disordered.

This sequence belongs to the HAD-like hydrolase superfamily. MasA/MtnC family. As to quaternary structure, monomer. Requires Mg(2+) as cofactor.

It localises to the cytoplasm. It is found in the nucleus. The enzyme catalyses 5-methylsulfanyl-2,3-dioxopentyl phosphate + H2O = 1,2-dihydroxy-5-(methylsulfanyl)pent-1-en-3-one + phosphate. It participates in amino-acid biosynthesis; L-methionine biosynthesis via salvage pathway; L-methionine from S-methyl-5-thio-alpha-D-ribose 1-phosphate: step 3/6. It functions in the pathway amino-acid biosynthesis; L-methionine biosynthesis via salvage pathway; L-methionine from S-methyl-5-thio-alpha-D-ribose 1-phosphate: step 4/6. Functionally, bifunctional enzyme that catalyzes the enolization of 2,3-diketo-5-methylthiopentyl-1-phosphate (DK-MTP-1-P) into the intermediate 2-hydroxy-3-keto-5-methylthiopentenyl-1-phosphate (HK-MTPenyl-1-P), which is then dephosphorylated to form the acireductone 1,2-dihydroxy-3-keto-5-methylthiopentene (DHK-MTPene). In Monosiga brevicollis (Choanoflagellate), this protein is Enolase-phosphatase E1.